Reading from the N-terminus, the 908-residue chain is Protein O-mannosyltransferase 1 (908 aa).

Disordered regions lie at residues 1-85 and 115-160; these read MYNN…SAIN and GSVE…SGSR. Residues 21–31 are compositionally biased toward basic residues; sequence QRRKTTTRSRS. 2 stretches are compositionally biased toward polar residues: residues 39-54 and 132-149; these read CTSENVIEKNQTNGAQ and LTATPTTTPKQASPSPTI. Residues 190-210 traverse the membrane as a helical segment; it reads FTVNLSIDLFSWTLFLLAFCT. An N-linked (GlcNAc...) asparagine glycan is attached at asparagine 265. 5 helical membrane passes run 279-299, 311-328, 331-351, 370-390, and 418-438; these read VPIFWFRFIPALCGSLLAPAV, WAAALGGLLVVLDNSLLT, RFVLMESMLLLASTLGIACLL, AGVLLACAGAVKYIGFLALAL, and LSRLLLFVGIPIAVYIGVFYV. 3 MIR domains span residues 473–534, 545–602, and 608–664; these read PLAV…VKRP, PDVI…VEIL, and GDSW…VEEH. 4 helical membrane-spanning segments follow: residues 749–769, 788–808, 813–833, and 857–877; these read VLIWYTASAGILVYATLLAFY, FLMAGDTFFVGYMMHYLPYYF, LFLHNYLPAFVFKLLLLCFVV, and LALLLWLLAVGSVFVKFLPLS.

Belongs to the glycosyltransferase 39 family. As to quaternary structure, interacts with tw/POMT2.

It localises to the endoplasmic reticulum membrane. It catalyses the reaction a di-trans,poly-cis-dolichyl beta-D-mannosyl phosphate + L-seryl-[protein] = 3-O-(alpha-D-mannosyl)-L-seryl-[protein] + a di-trans,poly-cis-dolichyl phosphate + H(+). The catalysed reaction is a di-trans,poly-cis-dolichyl beta-D-mannosyl phosphate + L-threonyl-[protein] = 3-O-(alpha-D-mannosyl)-L-threonyl-[protein] + a di-trans,poly-cis-dolichyl phosphate + H(+). Its pathway is protein modification; protein glycosylation. In terms of biological role, rt/POMT1 and tw/POMT2 function as a protein O-mannosyltransferase in association with each other to generate and maintain normal muscle development. This is Protein O-mannosyltransferase 1 from Drosophila pseudoobscura pseudoobscura (Fruit fly).